An 87-amino-acid chain; its full sequence is Protein anon-73B1 (87 aa).

A helical transmembrane segment spans residues 25-47; sequence LLIRYGLYVGALFQFVCISAAVL. The disordered stretch occupies residues 50-87; that stretch reads NNPDSQSNPETGEVTEREGEPVRTRLHKIRKLEKKKRR. Over residues 63 to 72 the composition is skewed to basic and acidic residues; it reads VTEREGEPVR. A compositionally biased stretch (basic residues) spans 73–87; that stretch reads TRLHKIRKLEKKKRR.

It belongs to the UPF0239 family.

The protein localises to the membrane. This chain is Protein anon-73B1 (anon-73B1), found in Drosophila simulans (Fruit fly).